The chain runs to 600 residues: Aspartate--tRNA(Asp/Asn) ligase (600 aa).

Glutamate 174 is an L-aspartate binding site. The segment at 198–201 is aspartate; sequence QLFK. Arginine 220 is a binding site for L-aspartate. ATP contacts are provided by residues 220 to 222 and glutamine 229; that span reads RDE. Position 457 (histidine 457) interacts with L-aspartate. Glutamate 491 is a binding site for ATP. Residue arginine 498 participates in L-aspartate binding. ATP is bound at residue 543-546; sequence GLDR.

It belongs to the class-II aminoacyl-tRNA synthetase family. Type 1 subfamily. As to quaternary structure, homodimer.

It is found in the cytoplasm. It carries out the reaction tRNA(Asx) + L-aspartate + ATP = L-aspartyl-tRNA(Asx) + AMP + diphosphate. In terms of biological role, aspartyl-tRNA synthetase with relaxed tRNA specificity since it is able to aspartylate not only its cognate tRNA(Asp) but also tRNA(Asn). Reaction proceeds in two steps: L-aspartate is first activated by ATP to form Asp-AMP and then transferred to the acceptor end of tRNA(Asp/Asn). This Burkholderia orbicola (strain AU 1054) protein is Aspartate--tRNA(Asp/Asn) ligase.